We begin with the raw amino-acid sequence, 308 residues long: Tyrosine recombinase XerC (308 aa).

The 82-residue stretch at Ser20 to Gln101 folds into the Core-binding (CB) domain. The 181-residue stretch at Asp122–Asn302 folds into the Tyr recombinase domain. Catalysis depends on residues Arg163, Lys187, His254, Arg257, and His280. Tyr289 acts as the O-(3'-phospho-DNA)-tyrosine intermediate in catalysis.

This sequence belongs to the 'phage' integrase family. XerC subfamily. As to quaternary structure, forms a cyclic heterotetrameric complex composed of two molecules of XerC and two molecules of XerD.

The protein resides in the cytoplasm. Functionally, site-specific tyrosine recombinase, which acts by catalyzing the cutting and rejoining of the recombining DNA molecules. The XerC-XerD complex is essential to convert dimers of the bacterial chromosome into monomers to permit their segregation at cell division. It also contributes to the segregational stability of plasmids. The polypeptide is Tyrosine recombinase XerC (Corynebacterium glutamicum (strain ATCC 13032 / DSM 20300 / JCM 1318 / BCRC 11384 / CCUG 27702 / LMG 3730 / NBRC 12168 / NCIMB 10025 / NRRL B-2784 / 534)).